We begin with the raw amino-acid sequence, 242 residues long: Aspartate/glutamate leucyltransferase (242 aa).

This sequence belongs to the R-transferase family. Bpt subfamily.

It is found in the cytoplasm. The catalysed reaction is N-terminal L-glutamyl-[protein] + L-leucyl-tRNA(Leu) = N-terminal L-leucyl-L-glutamyl-[protein] + tRNA(Leu) + H(+). The enzyme catalyses N-terminal L-aspartyl-[protein] + L-leucyl-tRNA(Leu) = N-terminal L-leucyl-L-aspartyl-[protein] + tRNA(Leu) + H(+). In terms of biological role, functions in the N-end rule pathway of protein degradation where it conjugates Leu from its aminoacyl-tRNA to the N-termini of proteins containing an N-terminal aspartate or glutamate. This is Aspartate/glutamate leucyltransferase from Chromobacterium violaceum (strain ATCC 12472 / DSM 30191 / JCM 1249 / CCUG 213 / NBRC 12614 / NCIMB 9131 / NCTC 9757 / MK).